Here is a 61-residue protein sequence, read N- to C-terminus: Large ribosomal subunit protein uL30 (61 aa).

It belongs to the universal ribosomal protein uL30 family. In terms of assembly, part of the 50S ribosomal subunit.

The sequence is that of Large ribosomal subunit protein uL30 from Exiguobacterium sibiricum (strain DSM 17290 / CCUG 55495 / CIP 109462 / JCM 13490 / 255-15).